We begin with the raw amino-acid sequence, 138 residues long: Aspartate 1-decarboxylase (138 aa).

Ser-25 (schiff-base intermediate with substrate; via pyruvic acid) is an active-site residue. Ser-25 is modified (pyruvic acid (Ser)). Substrate is bound at residue Thr-57. Residue Tyr-58 is the Proton donor of the active site. A substrate-binding site is contributed by 73 to 75 (GAA).

The protein belongs to the PanD family. As to quaternary structure, heterooctamer of four alpha and four beta subunits. Pyruvate is required as a cofactor. Is synthesized initially as an inactive proenzyme, which is activated by self-cleavage at a specific serine bond to produce a beta-subunit with a hydroxyl group at its C-terminus and an alpha-subunit with a pyruvoyl group at its N-terminus.

Its subcellular location is the cytoplasm. The catalysed reaction is L-aspartate + H(+) = beta-alanine + CO2. It functions in the pathway cofactor biosynthesis; (R)-pantothenate biosynthesis; beta-alanine from L-aspartate: step 1/1. Functionally, catalyzes the pyruvoyl-dependent decarboxylation of aspartate to produce beta-alanine. The chain is Aspartate 1-decarboxylase from Renibacterium salmoninarum (strain ATCC 33209 / DSM 20767 / JCM 11484 / NBRC 15589 / NCIMB 2235).